The sequence spans 739 residues: DNA ligase (739 aa).

Residue 34-38 (DADYD) coordinates NAD(+). A compositionally biased stretch (basic and acidic residues) spans 49–59 (ARFPHLKRPDS). Positions 49–70 (ARFPHLKRPDSPSEQVGARPGE) are disordered. Residues 83-84 (SL) and glutamate 117 contribute to the NAD(+) site. The active-site N6-AMP-lysine intermediate is lysine 119. Arginine 140, glutamate 175, lysine 291, and lysine 315 together coordinate NAD(+). Zn(2+)-binding residues include cysteine 420, cysteine 423, cysteine 438, and cysteine 444. Positions 660–739 (ARDSPVAGKT…DGWLKLIEGL (80 aa)) constitute a BRCT domain.

Belongs to the NAD-dependent DNA ligase family. LigA subfamily. Mg(2+) serves as cofactor. Mn(2+) is required as a cofactor.

It carries out the reaction NAD(+) + (deoxyribonucleotide)n-3'-hydroxyl + 5'-phospho-(deoxyribonucleotide)m = (deoxyribonucleotide)n+m + AMP + beta-nicotinamide D-nucleotide.. DNA ligase that catalyzes the formation of phosphodiester linkages between 5'-phosphoryl and 3'-hydroxyl groups in double-stranded DNA using NAD as a coenzyme and as the energy source for the reaction. It is essential for DNA replication and repair of damaged DNA. This chain is DNA ligase, found in Ruegeria pomeroyi (strain ATCC 700808 / DSM 15171 / DSS-3) (Silicibacter pomeroyi).